The following is a 604-amino-acid chain: Lipoprotein LpqB (604 aa).

The N-terminal stretch at 1–27 (MTMRAARLSGSTGLTAALVAVLLVLTG) is a signal peptide. Cysteine 28 carries the N-palmitoyl cysteine lipid modification. Cysteine 28 carries S-diacylglycerol cysteine lipidation. The disordered stretch occupies residues 35–60 (SAPQALGTIDREPTSEGPTPPIAGRD).

Belongs to the LpqB lipoprotein family.

Its subcellular location is the cell membrane. In Nocardia farcinica (strain IFM 10152), this protein is Lipoprotein LpqB.